Reading from the N-terminus, the 150-residue chain is Regulatory protein RecX (150 aa).

The protein belongs to the RecX family.

Its subcellular location is the cytoplasm. In terms of biological role, modulates RecA activity. The chain is Regulatory protein RecX from Legionella pneumophila (strain Corby).